Reading from the N-terminus, the 60-residue chain is Cytotoxin 4 (60 aa).

4 cysteine pairs are disulfide-bonded: Cys3–Cys21, Cys14–Cys38, Cys42–Cys53, and Cys54–Cys59.

This sequence belongs to the three-finger toxin family. Short-chain subfamily. Type IA cytotoxin sub-subfamily. As to quaternary structure, monomer in solution; Homodimer and oligomer in the presence of negatively charged lipids forming a pore with a size ranging between 20 and 30 Angstroms. In terms of tissue distribution, expressed by the venom gland.

Its subcellular location is the secreted. It is found in the target cell membrane. In terms of biological role, shows cytolytic activity on many different cells by forming pore in lipid membranes. In vivo, increases heart rate or kills the animal by cardiac arrest. In addition, it binds to heparin with high affinity, interacts with Kv channel-interacting protein 1 (KCNIP1) in a calcium-independent manner, and binds to integrin alpha-V/beta-3 (ITGAV/ITGB3) with moderate affinity. In Naja annulifera (Banded Egyptian cobra), this protein is Cytotoxin 4.